The primary structure comprises 2475 residues: Non-reducing polyketide synthase prhL (2475 aa).

Residues 14-253 (VLFGSKYSEI…HHADHLSAAQ (240 aa)) are N-terminal acylcarrier protein transacylase domain (SAT). The Ketosynthase family 3 (KS3) domain maps to 384–800 (SIPIAVTGLA…GSNAAIVLKE (417 aa)). Active-site for beta-ketoacyl synthase activity residues include cysteine 549, histidine 684, and histidine 723. The segment at 910–1212 (LCFGGQTGNK…CPMDLSGPQA (303 aa)) is malonyl-CoA:ACP transacylase (MAT) domain. The For acyl/malonyl transferase activity role is filled by serine 997. Residues 1279-1407 (EGLKLVQLLK…GTISLSPGAN (129 aa)) form an N-terminal hotdog fold region. The 308-residue stretch at 1279–1586 (EGLKLVQLLK…FTSVSIQSLR (308 aa)) folds into the PKS/mFAS DH domain. Residues 1282 to 1585 (KLVQLLKNEG…TFTSVSIQSL (304 aa)) are product template (PT) domain. The active-site Proton acceptor; for dehydratase activity is the histidine 1312. The segment at 1435–1586 (SSSGLKRSTV…FTSVSIQSLR (152 aa)) is C-terminal hotdog fold. Aspartate 1493 (proton donor; for dehydratase activity) is an active-site residue. Residues 1626–1703 (SSNGDDLRTV…ALVQRIFPGR (78 aa)) enclose the Carrier domain. Residue serine 1663 is modified to O-(pantetheine 4'-phosphoryl)serine. The interval 1865 to 2098 (HHTSEHKLLH…GFNWVDWTDN (234 aa)) is methyltransferase (CMeT) domain. The tract at residues 2127–2475 (SDIHEETVVY…YEFLRSHVRL (349 aa)) is thioesterase (TE) domain. Residues serine 2250 and aspartate 2412 each act as for thioesterase activity in the active site.

It catalyses the reaction 3 malonyl-CoA + acetyl-CoA + 2 S-adenosyl-L-methionine = 3,5-dimethylorsellinate + 2 S-adenosyl-L-homocysteine + 3 CO2 + 4 CoA. It functions in the pathway secondary metabolite biosynthesis; terpenoid biosynthesis. Its function is as follows. Non-reducing polyketide synthase; part of the gene cluster that mediates the biosynthesis of paraherquonin, a meroterpenoid with a unique, highly congested hexacyclic molecular architecture. The first step of the pathway is the synthesis of 3,5-dimethylorsellinic acid (DMOA) by the polyketide synthase prhL. Synthesis of DMOA is followed by farnesylation by the prenyltransferase prhE, methylesterification by the methyl-transferase prhM, epoxidation of the prenyl chain by the flavin-dependent monooxygenase prhF, and cyclization of the farnesyl moiety by the terpene cyclase prhH, to yield the tetracyclic intermediate, protoaustinoid A. The short chain dehydrogenase prhI then oxidizes the C-3 alcohol group of the terpene cyclase product to transform protoaustinoid A into protoaustinoid B. The FAD-binding monooxygenase prhJ catalyzes the oxidation of protoaustinoid B into preaustinoid A which is further oxidized into preaustinoid A1 by FAD-binding monooxygenase phrK. Finally, prhA leads to berkeleydione via the berkeleyone B intermediate. PrhA is a multifunctional dioxygenase that first desaturates at C5-C6 to form berkeleyone B, followed by rearrangement of the A/B-ring to form the cycloheptadiene moiety in berkeleydione. Berkeleydione serves as the key intermediate for the biosynthesis of paraherquonin as well as many other meroterpenoids. The cytochrome P450 monooxygenases prhB, prhD, and prhN, as well as the isomerase prhC, are probably involved in the late stage of paraherquonin biosynthesis, after the production of berkeleydione. Especially prhC might be a multifunctional enzyme that catalyzes the D-ring expansion via intramolecular methoxy rearrangement, as well as the hydrolysis of the expanded D-ring. The chain is Non-reducing polyketide synthase prhL from Penicillium brasilianum.